Here is a 713-residue protein sequence, read N- to C-terminus: Polyribonucleotide nucleotidyltransferase (713 aa).

Residues Asp491 and Asp497 each coordinate Mg(2+). The region spanning 558–617 (PRMITIKINPEKIRDVIGKGGSVIRALTEETGTTIDISDDGVVTIASTSSDGMAEAKKRI) is the KH domain. Residues 627–695 (GQVYEGTVLK…EKGRVRLSAK (69 aa)) form the S1 motif domain.

It belongs to the polyribonucleotide nucleotidyltransferase family. It depends on Mg(2+) as a cofactor.

The protein resides in the cytoplasm. It catalyses the reaction RNA(n+1) + phosphate = RNA(n) + a ribonucleoside 5'-diphosphate. Functionally, involved in mRNA degradation. Catalyzes the phosphorolysis of single-stranded polyribonucleotides processively in the 3'- to 5'-direction. In Burkholderia cenocepacia (strain ATCC BAA-245 / DSM 16553 / LMG 16656 / NCTC 13227 / J2315 / CF5610) (Burkholderia cepacia (strain J2315)), this protein is Polyribonucleotide nucleotidyltransferase.